The sequence spans 435 residues: Centrosomal protein of 55 kDa (435 aa).

3 disordered regions span residues 1 to 63 (MAAK…TDKA), 213 to 239 (HKEA…KVSR), and 268 to 287 (ERRR…ALLQ). Coiled coils occupy residues 18 to 140 (SSSS…KNKY) and 185 to 373 (EAYV…RESR). 2 stretches are compositionally biased toward basic and acidic residues: residues 26-49 (AELE…DMKR) and 213-222 (HKEAKSDDQS).

Its subcellular location is the cytoplasm. It localises to the cytoskeleton. The protein localises to the microtubule organizing center. The protein resides in the centrosome. It is found in the centriole. Its subcellular location is the cleavage furrow. It localises to the midbody. The protein localises to the midbody ring. Plays a role in mitotic exit and cytokinesis. Recruits PDCD6IP and TSG101 to midbody during cytokinesis. Required for successful completion of cytokinesis. Not required for microtubule nucleation. Plays a role in the development of the brain and kidney. This is Centrosomal protein of 55 kDa from Danio rerio (Zebrafish).